A 310-amino-acid chain; its full sequence is MNTQARLTSTQWKARFKGYVQVTKPGIIFGNLISVAGGFLLAAKGDVDLVLMLASLVGLSLVVASGCAINNCIDRDIDAKMQRTCKRVTVTGEIPLSHVLLFGIALGVLGFGILALFTNTLALLFAAIGYVVYVGIYSLYMKRNSVYGTLVGSFSGAVPPVVGYCSVTGQMDMGAVILLLMFSLWQMPHSYAIAIFRFNDYAAAKIPVLPVAEGMAKAKHHIVLYIAVFALVSTMLPLAGYTGTAFMAVTCATSLWWLTMALKGYRQDVDMPRWARQVFGFSIITITALSVTMALDFQAVSQTPLFTLVR.

Transmembrane regions (helical) follow at residues 25 to 45 (PGII…AAKG), 49 to 69 (LVLM…GCAI), 98 to 118 (HVLL…ALFT), 121 to 141 (LALL…SLYM), 145 to 165 (SVYG…VGYC), 176 to 196 (VILL…IAIF), 222 to 242 (IVLY…AGYT), 245 to 265 (AFMA…LKGY), and 277 to 297 (QVFG…ALDF).

Belongs to the UbiA prenyltransferase family. Protoheme IX farnesyltransferase subfamily.

The protein resides in the cell inner membrane. The enzyme catalyses heme b + (2E,6E)-farnesyl diphosphate + H2O = Fe(II)-heme o + diphosphate. It participates in porphyrin-containing compound metabolism; heme O biosynthesis; heme O from protoheme: step 1/1. Functionally, converts heme B (protoheme IX) to heme O by substitution of the vinyl group on carbon 2 of heme B porphyrin ring with a hydroxyethyl farnesyl side group. The polypeptide is Protoheme IX farnesyltransferase 2 (Shewanella sp. (strain MR-4)).